An 893-amino-acid chain; its full sequence is Sulfate permease 2 (893 aa).

A disordered region spans residues 1–25 (MSREGYPNFEEVEIPDFQETNNTVP). Topologically, residues 1 to 131 (MSREGYPNFE…VFPIINWLPH (131 aa)) are cytoplasmic. Residues 132 to 152 (YNFSWFTADLIAGITIGCVLV) traverse the membrane as a helical segment. Topologically, residues 153-163 (PQSMSYAQVAT) are extracellular. Residues 164-184 (LPAQYGLYSSFIGAYSYSFFA) traverse the membrane as a helical segment. Topologically, residues 185 to 188 (TSKD) are cytoplasmic. The chain crosses the membrane as a helical span at residues 189 to 209 (VCIGPVAVMSLQTAKVIADVT). The Extracellular portion of the chain corresponds to 210–221 (AKYPDGDSAITG). Residues 222–242 (PVIATTLALLCGIISAAVGFL) traverse the membrane as a helical segment. Over 243-244 (RL) the chain is Cytoplasmic. Residues 245-265 (GFLVELISLNAVAGFMTGSAF) traverse the membrane as a helical segment. At 266-305 (NILWGQVPALMGYNSLVNTRAATYKVVIETLKHLPDTKLD) the chain is on the extracellular side. The chain crosses the membrane as a helical span at residues 306–326 (AVFGLIPLFLLYVWKWWCGTY). Over 327–350 (GPRLNDRYNSKNPRLHKIIKWTYF) the chain is Cytoplasmic. A helical membrane pass occupies residues 351 to 371 (YAQASRNGIIIIVFTCIGWAI). The Extracellular portion of the chain corresponds to 372–399 (TRGKSKSERPISILGSVPSGLKEVGVFH). A helical membrane pass occupies residues 400-420 (VPPGLMSKLGPNLPASIIVLL). The Cytoplasmic segment spans residues 421 to 443 (LEHIAISKSFGRINDYKVVPDQE). Residues 444–464 (LIAIGVSNLLGTFFNAYPATG) traverse the membrane as a helical segment. Residues 465-483 (SFSRSALKAKCNVRTPLSG) lie on the Extracellular side of the membrane. Residues 484 to 504 (LFSGSCVLLALYCLTGAFFYI) traverse the membrane as a helical segment. The Cytoplasmic segment spans residues 505–532 (PKATLSAVIIHAVSDLLASYQTTWNFWK). A helical transmembrane segment spans residues 533–551 (MNPLDFICFIVTVLITVFA). The Extracellular segment spans residues 552–559 (SIEDGIYF). The chain crosses the membrane as a helical span at residues 560 to 580 (AMCWSCAMLILKVAFPAGKFL). Residues 581 to 893 (GRVEVAEVTD…DIPDFAKWDI (313 aa)) lie on the Cytoplasmic side of the membrane. Positions 676-854 (DVQILPPPDG…SIVAGHTSYH (179 aa)) constitute an STAS domain.

Belongs to the SLC26A/SulP transporter (TC 2.A.53) family.

It is found in the membrane. Its function is as follows. High affinity uptake of sulfate into the cell. The chain is Sulfate permease 2 (SUL2) from Saccharomyces cerevisiae (strain ATCC 204508 / S288c) (Baker's yeast).